We begin with the raw amino-acid sequence, 348 residues long: Dihydroorotase (348 aa).

Positions 14 and 16 each coordinate Zn(2+). Substrate is bound by residues 16-18 (HLR) and Asn42. Positions 100, 137, and 175 each coordinate Zn(2+). N6-carboxylysine is present on Lys100. Residue His137 coordinates substrate. Leu220 contributes to the substrate binding site. Asp248 contributes to the Zn(2+) binding site. The active site involves Asp248. Residues His252 and Ala264 each coordinate substrate.

It belongs to the metallo-dependent hydrolases superfamily. DHOase family. Class II DHOase subfamily. In terms of assembly, homodimer. Requires Zn(2+) as cofactor.

It catalyses the reaction (S)-dihydroorotate + H2O = N-carbamoyl-L-aspartate + H(+). It participates in pyrimidine metabolism; UMP biosynthesis via de novo pathway; (S)-dihydroorotate from bicarbonate: step 3/3. In terms of biological role, catalyzes the reversible cyclization of carbamoyl aspartate to dihydroorotate. The chain is Dihydroorotase from Pseudomonas entomophila (strain L48).